The primary structure comprises 104 residues: Thioredoxin (104 aa).

The 103-residue stretch at 2-104 (AIVKVTDSDF…NLAEVLDKHL (103 aa)) folds into the Thioredoxin domain. A disulfide bridge connects residues cysteine 29 and cysteine 32.

Belongs to the thioredoxin family.

Its function is as follows. Component of the thioredoxin-thioredoxin reductase system. Participates in various redox reactions through the reversible oxidation of its active center dithiol to a disulfide and catalyzes dithiol-disulfide exchange reactions. In Staphylococcus epidermidis (strain ATCC 35984 / DSM 28319 / BCRC 17069 / CCUG 31568 / BM 3577 / RP62A), this protein is Thioredoxin (trxA).